We begin with the raw amino-acid sequence, 149 residues long: MLFMAGPAASWSLRPLGLHGVPQALCAVLLTVLVMKTLVLGDTKLEDLHPQSLPLNKYLNCYRCLLETEELGCLLGSDTCLTPLGSSCVTLHIKNSSGFNVMVSDCYSKEQMVHCSYTRASPVFGFWIFYQCCFLDFCNNPDNRKNSMH.

The N-terminal stretch at 1-41 (MLFMAGPAASWSLRPLGLHGVPQALCAVLLTVLVMKTLVLG) is a signal peptide. In terms of domain architecture, UPAR/Ly6 spans 59-149 (LNCYRCLLET…NPDNRKNSMH (91 aa)). 5 disulfide bridges follow: cysteine 61-cysteine 88, cysteine 64-cysteine 73, cysteine 80-cysteine 106, cysteine 115-cysteine 132, and cysteine 133-cysteine 138. N-linked (GlcNAc...) asparagine glycosylation is present at asparagine 95.

Forms oligomers. N-glycosylated. In terms of tissue distribution, detected in adult brain.

It localises to the secreted. Functionally, may have a role in hematopoietic cell differentiation. This Mus musculus (Mouse) protein is Lymphocyte antigen 6 complex locus protein G5c (Ly6g5c).